Here is an 88-residue protein sequence, read N- to C-terminus: Small ribosomal subunit protein bS20 (88 aa).

Belongs to the bacterial ribosomal protein bS20 family.

Binds directly to 16S ribosomal RNA. This Natranaerobius thermophilus (strain ATCC BAA-1301 / DSM 18059 / JW/NM-WN-LF) protein is Small ribosomal subunit protein bS20.